Consider the following 346-residue polypeptide: Lipooligosaccharide heptosyltransferase 2 (346 aa).

It belongs to the glycosyltransferase 9 family.

The catalysed reaction is an L-alpha-D-Hep-(1-&gt;5)-[alpha-Kdo-(2-&gt;4)]-alpha-Kdo-(2-&gt;6)-lipid A + ADP-L-glycero-beta-D-manno-heptose = an L-alpha-D-Hep-(1-&gt;3)-L-alpha-D-Hep-(1-&gt;5)-[alpha-Kdo-(2-&gt;4)]-alpha-Kdo-(2-&gt;6)-lipid A + ADP + H(+). It participates in bacterial outer membrane biogenesis; LOS core biosynthesis. Its function is as follows. Glycosyltransferase involved in the biosynthesis of the core oligosaccharide region of lipooligosaccharide (LOS). Catalyzes the addition of a heptose unit to the heptosyl-Kdo2-lipid A module. The polypeptide is Lipooligosaccharide heptosyltransferase 2 (waaF) (Haemophilus influenzae (strain ATCC 51907 / DSM 11121 / KW20 / Rd)).